The sequence spans 358 residues: 4-hydroxy-3-methylbut-2-en-1-yl diphosphate synthase (flavodoxin) (358 aa).

[4Fe-4S] cluster is bound by residues Cys264, Cys267, Cys299, and Glu306.

The protein belongs to the IspG family. It depends on [4Fe-4S] cluster as a cofactor.

The enzyme catalyses (2E)-4-hydroxy-3-methylbut-2-enyl diphosphate + oxidized [flavodoxin] + H2O + 2 H(+) = 2-C-methyl-D-erythritol 2,4-cyclic diphosphate + reduced [flavodoxin]. The protein operates within isoprenoid biosynthesis; isopentenyl diphosphate biosynthesis via DXP pathway; isopentenyl diphosphate from 1-deoxy-D-xylulose 5-phosphate: step 5/6. Converts 2C-methyl-D-erythritol 2,4-cyclodiphosphate (ME-2,4cPP) into 1-hydroxy-2-methyl-2-(E)-butenyl 4-diphosphate. This Helicobacter acinonychis (strain Sheeba) protein is 4-hydroxy-3-methylbut-2-en-1-yl diphosphate synthase (flavodoxin).